We begin with the raw amino-acid sequence, 225 residues long: Small ribosomal subunit protein uS3 (225 aa).

Positions 38-106 constitute a KH type-2 domain; sequence LRGHLRKKLS…DVALNIVEIR (69 aa).

This sequence belongs to the universal ribosomal protein uS3 family. In terms of assembly, part of the 30S ribosomal subunit. Forms a tight complex with proteins S10 and S14.

In terms of biological role, binds the lower part of the 30S subunit head. Binds mRNA in the 70S ribosome, positioning it for translation. The sequence is that of Small ribosomal subunit protein uS3 from Granulibacter bethesdensis (strain ATCC BAA-1260 / CGDNIH1).